The primary structure comprises 133 residues: S-adenosylmethionine decarboxylase proenzyme (133 aa).

S65 acts as the Schiff-base intermediate with substrate; via pyruvic acid in catalysis. S65 bears the Pyruvic acid (Ser); by autocatalysis mark. Catalysis depends on H70, which acts as the Proton acceptor; for processing activity. Residue C85 is the Proton donor; for catalytic activity of the active site.

This sequence belongs to the prokaryotic AdoMetDC family. Type 1 subfamily. As to quaternary structure, heterotetramer of two alpha and two beta chains arranged as a dimer of alpha/beta heterodimers. Requires pyruvate as cofactor. In terms of processing, is synthesized initially as an inactive proenzyme. Formation of the active enzyme involves a self-maturation process in which the active site pyruvoyl group is generated from an internal serine residue via an autocatalytic post-translational modification. Two non-identical subunits are generated from the proenzyme in this reaction, and the pyruvate is formed at the N-terminus of the alpha chain, which is derived from the carboxyl end of the proenzyme. The post-translation cleavage follows an unusual pathway, termed non-hydrolytic serinolysis, in which the side chain hydroxyl group of the serine supplies its oxygen atom to form the C-terminus of the beta chain, while the remainder of the serine residue undergoes an oxidative deamination to produce ammonia and the pyruvoyl group blocking the N-terminus of the alpha chain.

The catalysed reaction is S-adenosyl-L-methionine + H(+) = S-adenosyl 3-(methylsulfanyl)propylamine + CO2. It participates in amine and polyamine biosynthesis; S-adenosylmethioninamine biosynthesis; S-adenosylmethioninamine from S-adenosyl-L-methionine: step 1/1. Its function is as follows. Catalyzes the decarboxylation of S-adenosylmethionine to S-adenosylmethioninamine (dcAdoMet), the propylamine donor required for the synthesis of the polyamines spermine and spermidine from the diamine putrescine. This chain is S-adenosylmethionine decarboxylase proenzyme, found in Brevibacillus brevis (strain 47 / JCM 6285 / NBRC 100599).